The primary structure comprises 467 residues: Uronate isomerase (467 aa).

This sequence belongs to the metallo-dependent hydrolases superfamily. Uronate isomerase family.

The catalysed reaction is D-glucuronate = D-fructuronate. It carries out the reaction aldehydo-D-galacturonate = keto-D-tagaturonate. It functions in the pathway carbohydrate metabolism; pentose and glucuronate interconversion. This chain is Uronate isomerase, found in Haemophilus influenzae (strain 86-028NP).